Here is a 682-residue protein sequence, read N- to C-terminus: Solute carrier organic anion transporter family member 2B1 (682 aa).

Positions 1 to 30 (MPDRSTKATMGAEDIHERKVSMEPRDSHQD) are disordered. Residues 1–41 (MPDRSTKATMGAEDIHERKVSMEPRDSHQDAQPRGMFQNIK) are Cytoplasmic-facing. Residues 13-30 (EDIHERKVSMEPRDSHQD) show a composition bias toward basic and acidic residues. The residue at position 21 (Ser21) is a Phosphoserine. The chain crosses the membrane as a helical span at residues 42-61 (FFVLCHSILQLAQLMISGYL). Topologically, residues 62–80 (KSSISTVEKRFGLSSQTSG) are extracellular. The helical transmembrane segment at 81–101 (LLAAFNEVGNISLILFVSYFG) threads the bilayer. Residues 102 to 107 (SRVHRP) lie on the Cytoplasmic side of the membrane. A helical membrane pass occupies residues 108–132 (RMIGCGAILVAVAGLLMALPHFISE). Topologically, residues 133–176 (PYRYDHSSPDRSQDFEASLCLPTTMAPASALSNDSCSSRTETKH) are extracellular. The N-linked (GlcNAc...) asparagine glycan is linked to Asn165. The chain crosses the membrane as a helical span at residues 177-206 (LTMVGIMFTAQTLLGIGGVPIQPFGISYID). The Cytoplasmic segment spans residues 207–225 (DFAHHSNSPLYLGILFAIT). The chain crosses the membrane as a helical span at residues 226–246 (MMGPGLAYGLGSLMLRLYVDI). Residues 247–264 (DRMPEGGINLTTKDPRWV) lie on the Extracellular side of the membrane. N-linked (GlcNAc...) asparagine glycosylation is present at Asn255. The chain crosses the membrane as a helical span at residues 265-289 (GAWWLGFLISAGLVVLAASPYFFFP). At 290 to 354 (REMPKEKYEL…IKVFPRVLLR (65 aa)) the chain is on the cytoplasmic side. Ser311 and Ser314 each carry phosphoserine. A helical transmembrane segment spans residues 355–376 (TLRHPIFLLVVLSQVCTSSMVA). Residues 377-396 (GTATFLPKFLERQFSITASF) lie on the Extracellular side of the membrane. The helical transmembrane segment at 397–420 (ANLLLGCLTIPLAIVGIVVGGVLV) threads the bilayer. The Cytoplasmic segment spans residues 421 to 424 (KRLH). The chain crosses the membrane as a helical span at residues 425 to 448 (LSPMQCSALCLLGSLLCLLLSLPL). Topologically, residues 449-552 (FFIGCSTHHI…SACSRLVLPF (104 aa)) are extracellular. One can recognise a Kazal-like domain in the interval 471–531 (PSLFPGCSEP…VFYTNCSCVA (61 aa)). 3 cysteine pairs are disulfide-bonded: Cys477–Cys508, Cys483–Cys504, and Cys492–Cys529. N-linked (GlcNAc...) asparagine glycosylation is found at Asn526 and Asn533. The chain crosses the membrane as a helical span at residues 553 to 575 (ILLISLGAAVASITHTPSFMLIL). The Cytoplasmic portion of the chain corresponds to 576–584 (RGVKKEDKT). Residues 585–610 (LAVGMQFMLLRVLAWMPSPVIHGSAI) form a helical membrane-spanning segment. Over 611–643 (DTTCVHWALTCGRRAVCRYYDHDLLRNRFIGLQ) the chain is Extracellular. A helical membrane pass occupies residues 644–661 (FFFKSGSLVCFALVLAIL). At 662-682 (RQQSREASTKATVKSSDLQEL) the chain is on the cytoplasmic side.

The protein belongs to the organo anion transporter (TC 2.A.60) family. As to expression, expressed in liver, kidney, heart, lung and retina. Widely distributed in all brain regions.

It is found in the cell membrane. The protein localises to the basal cell membrane. The protein resides in the apical cell membrane. The catalysed reaction is coproporphyrin III(out) = coproporphyrin III(in). The enzyme catalyses substance P(out) = substance P(in). It catalyses the reaction taurocholate(out) = taurocholate(in). It carries out the reaction prostaglandin E1(out) = prostaglandin E1(in). The catalysed reaction is prostaglandin E2(out) = prostaglandin E2(in). The enzyme catalyses prostaglandin D2(out) = prostaglandin D2(in). It catalyses the reaction leukotriene C4(out) = leukotriene C4(in). It carries out the reaction L-thyroxine(out) = L-thyroxine(in). Its function is as follows. Mediates the Na(+)-independent transport of organic anions such as taurocholate, the prostaglandins D2 (PGD2), E1 (PGE1) and E2 (PGE2), leukotriene C4, thromboxane B2 and L-thyroxine. Also plays a role in the reuptake of neuropeptides such as substance P/TAC1 and vasoactive intestinal peptide/VIP released from retinal neurons. May act as a heme transporter that promotes cellular iron availability. Also transports heme by-product coproporphyrin III (CPIII), and may be involved in their hepatic disposition. May contribute to regulate the transport of organic compounds in testis across the blood-testis-barrier. Shows a pH-sensitive substrate specificity which may be ascribed to the protonation state of the binding site and leads to a stimulation of substrate transport in an acidic microenvironment. The exact transport mechanism has not been yet deciphered but most likely involves an anion exchange, coupling the cellular uptake of organic substrate with the efflux of an anionic compound. Hydrogencarbonate/HCO3(-) acts as a probable counteranion that exchanges for organic anions. Cytoplasmic glutamate may also act as counteranion in the placenta. In Rattus norvegicus (Rat), this protein is Solute carrier organic anion transporter family member 2B1.